The primary structure comprises 319 residues: Acetyl esterase (319 aa).

The Involved in the stabilization of the negatively charged intermediate by the formation of the oxyanion hole signature appears at 91–93 (HGG). Residues Ser-165, Asp-262, and His-292 contribute to the active site.

Belongs to the 'GDXG' lipolytic enzyme family. As to quaternary structure, homodimer. Interacts with MalT and MelA.

Its subcellular location is the cytoplasm. Functionally, displays esterase activity towards short chain fatty esters (acyl chain length of up to 8 carbons). Able to hydrolyze triacetylglycerol (triacetin) and tributyrylglycerol (tributyrin), but not trioleylglycerol (triolein) or cholesterol oleate. Negatively regulates MalT activity by antagonizing maltotriose binding. Inhibits MelA galactosidase activity. The protein is Acetyl esterase of Shigella boydii serotype 4 (strain Sb227).